The primary structure comprises 238 residues: Endo-chitosanase (238 aa).

The first 17 residues, 1 to 17 (MRLSEILTVALVTGATA), serve as a signal peptide directing secretion. An N-linked (GlcNAc...) asparagine glycan is attached at asparagine 83.

The protein belongs to the glycosyl hydrolase 75 family.

Its subcellular location is the secreted. The catalysed reaction is Endohydrolysis of beta-(1-&gt;4)-linkages between D-glucosamine residues in a partly acetylated chitosan.. In terms of biological role, chitosanase catalyzing the endo-type cleavage of chitosan, the deacylated form of chitin. Chitosanase may be crucial in the degradation of the deacetylated portion of chitin in the fungal cell wall. Chitoolisaccharides produced by the hydrolysis of partially N-acetylated chitosan are known to have many biological activities, including antibacterial activity, immune-enhancing effects, and elicitor activity. The chitosans with higher degrees of deacetylation were shown to be the better substrates. Chitodimer, chitotrimer, and chitotetramer are the major products but monoacetyl chitodimer, monoacetyl chitotrimer, and monoacetyl chitotetramer are also produced. The polypeptide is Endo-chitosanase (csn) (Aspergillus fumigatus (Neosartorya fumigata)).